A 513-amino-acid chain; its full sequence is Dye-decolorizing peroxidase msp1 (513 aa).

An N-terminal signal peptide occupies residues 1 to 20 (MKLFSASVFAAIIASHYASA). The propeptide occupies 21-55 (TAHIRAPNVKPRRTNSLLTAPPQQPPLPSAQQAAS). The disordered stretch occupies residues 33–52 (RTNSLLTAPPQQPPLPSAQQ). Aspartate 228 (proton acceptor) is an active-site residue. Residue histidine 365 participates in heme binding.

Homodimer. Requires heme b as cofactor.

Its subcellular location is the secreted. It carries out the reaction Reactive Blue 5 + 2 H2O2 = 2,2'-disulfonyl azobenzene + 3-[(4-amino-6-chloro-1,3,5-triazin-2-yl)amino]benzenesulfonate + phthalate + 2 H2O + 2 H(+). It catalyses the reaction 2 a phenolic donor + H2O2 = 2 a phenolic radical donor + 2 H2O. Manganese-independent peroxidase that is able to convert a large number of compounds, but its physiological substrate is not known. In addition to classic peroxidase substrates (e.g. 2,6-dimethoxyphenol), oxidizes dyes such as Reactive Blue 5. Also degrades beta-carotene. This Mycetinis scorodonius (Garlic mushroom) protein is Dye-decolorizing peroxidase msp1.